A 166-amino-acid chain; its full sequence is uncharacterized protein (166 aa).

117 to 124 (AAKSGGKT) lines the ATP pocket.

This is an uncharacterized protein from Mycoplasma pneumoniae (strain ATCC 29342 / M129 / Subtype 1) (Mycoplasmoides pneumoniae).